Here is a 386-residue protein sequence, read N- to C-terminus: Patatin group M-3 (386 aa).

The N-terminal stretch at 1–23 is a signal peptide; that stretch reads MATTKSFLILFFMILATTSSTCA. In terms of domain architecture, PNPLA spans 32–229; sequence LSIDGGGIKG…TVGDPALLSL (198 aa). Positions 36-41 match the GXGXXG motif; that stretch reads GGGIKG. The GXSXG signature appears at 75–79; it reads GTSTG. The active-site Nucleophile is the S77. The N-linked (GlcNAc...) asparagine glycan is linked to N115. The active-site Proton acceptor is D215. The DGA/G motif lies at 215–217; it reads DGG. Residues 321-384 adopt a coiled-coil conformation; that stretch reads ENALTGTTTE…DRKKLRANKA (64 aa).

It belongs to the patatin family. As to expression, tuber.

It is found in the vacuole. Its function is as follows. Probable lipolytic acyl hydrolase (LAH), an activity which is thought to be involved in the response of tubers to pathogens. The sequence is that of Patatin group M-3 from Solanum tuberosum (Potato).